Reading from the N-terminus, the 524-residue chain is Acetyl-CoA decarbonylase/synthase complex subunit beta (524 aa).

[Ni-Fe-S] cluster is bound by residues Cys212, Cys215, Cys301, and Cys303. A disordered region spans residues 436–466 (WVEEEEEEAEEVAEEAAAEAAPAAQPAQAAQ). Over residues 437-452 (VEEEEEEAEEVAEEAA) the composition is skewed to acidic residues. The segment covering 453–466 (AEAAPAAQPAQAAQ) has biased composition (low complexity).

This sequence belongs to the CdhC family. As to quaternary structure, monomer. The ACDS complex is made up of alpha, epsilon, beta, gamma and delta chains with a probable stoichiometry of (alpha(2)epsilon(2))(4)-beta(8)-(gamma(1)delta(1))(8). Requires [Ni-Fe-S] cluster as cofactor.

The enzyme catalyses Co(I)-[corrinoid Fe-S protein] + acetyl-CoA + H(+) = methyl-Co(III)-[corrinoid Fe-S protein] + CO + CoA. Its function is as follows. Part of a complex that catalyzes the reversible cleavage of acetyl-CoA, allowing autotrophic growth from CO(2). The alpha-epsilon complex generates CO from CO(2), while the beta subunit (this protein) combines the CO with CoA and a methyl group to form acetyl-CoA. The methyl group, which is incorporated into acetyl-CoA, is transferred to the beta subunit by a corrinoid iron-sulfur protein (the gamma-delta complex). The chain is Acetyl-CoA decarbonylase/synthase complex subunit beta from Archaeoglobus fulgidus (strain ATCC 49558 / DSM 4304 / JCM 9628 / NBRC 100126 / VC-16).